The chain runs to 82 residues: Small ribosomal subunit protein bTHXm (82 aa).

The transit peptide at 1 to 22 directs the protein to the mitochondrion; that stretch reads MAMRLAAAAAFVRRLVPARNPV. The tract at residues 34-56 is disordered; sequence RGDKKTKRGKRFKGSYGNARPKR. Positions 37-46 are enriched in basic residues; it reads KKTKRGKRFK.

The protein belongs to the bacterial ribosomal protein bTHX family.

The protein resides in the mitochondrion. In Oryza sativa subsp. japonica (Rice), this protein is Small ribosomal subunit protein bTHXm.